Consider the following 164-residue polypeptide: Thiol peroxidase (164 aa).

A Thioredoxin domain is found at 16 to 162 (LQVGDIAKDF…YEAAINAAKI (147 aa)). Cys58 functions as the Cysteine sulfenic acid (-SOH) intermediate in the catalytic mechanism. The cysteines at positions 58 and 92 are disulfide-linked.

Belongs to the peroxiredoxin family. Tpx subfamily. As to quaternary structure, homodimer.

The enzyme catalyses a hydroperoxide + [thioredoxin]-dithiol = an alcohol + [thioredoxin]-disulfide + H2O. Thiol-specific peroxidase that catalyzes the reduction of hydrogen peroxide and organic hydroperoxides to water and alcohols, respectively. Plays a role in cell protection against oxidative stress by detoxifying peroxides. The protein is Thiol peroxidase of Streptococcus agalactiae serotype V (strain ATCC BAA-611 / 2603 V/R).